An 87-amino-acid chain; its full sequence is Putative defensin-like protein 169 (87 aa).

The N-terminal stretch at methionine 1–glycine 21 is a signal peptide. Cystine bridges form between cysteine 36-cysteine 86, cysteine 48-cysteine 74, cysteine 53-cysteine 80, and cysteine 57-cysteine 82.

It belongs to the DEFL family.

The protein resides in the secreted. This Arabidopsis thaliana (Mouse-ear cress) protein is Putative defensin-like protein 169.